The following is a 104-amino-acid chain: Intracellular chorismate mutase (104 aa).

Residues 23-104 (AVPEIDDLRR…LRLGRGRLGY (82 aa)) form the Chorismate mutase domain. The chorismate site is built by Arg-59, Val-68, and Glu-72.

Homodimer. Probably interacts with AroG (MSMEG_4244).

It is found in the cytoplasm. It catalyses the reaction chorismate = prephenate. The protein operates within metabolic intermediate biosynthesis; prephenate biosynthesis; prephenate from chorismate: step 1/1. The formation of the complex with AroG activates the chorismate mutase activity. Catalyzes the Claisen rearrangement of chorismate to prephenate. Probably involved in the aromatic amino acid biosynthesis. In Mycolicibacterium smegmatis (strain ATCC 700084 / mc(2)155) (Mycobacterium smegmatis), this protein is Intracellular chorismate mutase.